Consider the following 68-residue polypeptide: Neuronal regeneration-related protein (68 aa).

In terms of assembly, interacts with FLNA. Interacts with the latency-associated peptides (LAP) of TGFB1 and TGFB2; the interaction results in a decrease in TGFB autoinduction. Phosphorylated on Ser-59. Phosphorylation decreases stability and activity.

The protein localises to the cytoplasm. Functionally, may have roles in neural function. Ectopic expression promotes axonal regeneration. Also augments motility of gliomas. May also have roles in cellular differentiation. Induces differentiation of fibroblast into myofibroblast and myofibroblast ameboid migration. Increases retinoic-acid regulation of lipid-droplet biogenesis. Down-regulates the expression of TGFB1 and TGFB2 but not of TGFB3. May play a role in the regulation of alveolar generation. The polypeptide is Neuronal regeneration-related protein (Nrep) (Rattus norvegicus (Rat)).